The chain runs to 354 residues: NAD-dependent epimerase/dehydratase ALT6 (354 aa).

K41 and Y174 together coordinate NADP(+).

Belongs to the NAD(P)-dependent epimerase/dehydratase family. Dihydroflavonol-4-reductase subfamily.

It functions in the pathway mycotoxin biosynthesis. In terms of biological role, NAD-dependent epimerase/dehydratase; part of the gene cluster that mediates the biosynthesis of the host-selective toxins (HSTs) AAL-toxins, sphinganine-analog mycotoxins responsible for Alternaria stem canker on tomato by the tomato pathotype. The biosynthesis starts with the polyketide synthase ALT1-catalyzed C-16 carbon chain assembly from one starter acetyl-CoA unit with malonyl-CoA extender units. ALT1 also selectively transfers methyl groups at the first and the third cycle of chain elongation for AAL toxin. The C-16 polyketide chain is released from the enzyme by a nucleophilic attack of a carbanion, which is derived from R-carbon of glycin by decarboxylation, on the carbonyl carbon of polyketide acyl chain. This step is probably catalyzed by a pyridoxal 5'-phosphate-dependent aminoacyl transferase ALT4. The respective functions of the other enzymes encoded by the cluster have still to be elucidated. The sphingosine N-acyltransferase-like protein ALT7 seems not to act as a resistance/self-tolerance factor against the toxin in the toxin biosynthetic gene cluster, contrary to what is expected. The protein is NAD-dependent epimerase/dehydratase ALT6 of Alternaria alternata (Alternaria rot fungus).